The chain runs to 160 residues: uncharacterized protein (160 aa).

Residues 1–33 (MPLRPCRHHQGFLPKKQWRAKFPQLIVLMGRVA) are Extracellular-facing. The helical transmembrane segment at 34–54 (AEELLPAVAVAAVVVAVVVAV) threads the bilayer. Over 55-68 (ERVVPLLFVHRPDS) the chain is Cytoplasmic. The chain crosses the membrane as a helical span at residues 69–89 (FFLIFFFQSCFVCCCCCCSCS). At 90-119 (TSLKAYSSEKEKQKYGKRGNGNTPLVQRLV) the chain is on the extracellular side. The chain crosses the membrane as a helical span at residues 120 to 140 (TLSYLALLILVLSIELLTWFV). Over 141 to 160 (KKQRTGNKKQKDKEKNALLL) the chain is Cytoplasmic.

The protein localises to the membrane. This is an uncharacterized protein from Saccharomyces cerevisiae (strain ATCC 204508 / S288c) (Baker's yeast).